A 917-amino-acid polypeptide reads, in one-letter code: Thiamine biosynthesis bifunctional protein ThiEC (917 aa).

Residues 1–243 (MSNEYPYASM…EGWKAVRGDK (243 aa)) are thiamine-phosphate synthase. Residues 48–52 (QLRAK) and Asp-84 contribute to the 4-amino-2-methyl-5-(diphosphooxymethyl)pyrimidine site. Mg(2+) contacts are provided by Asp-85 and Asp-109. Ser-128 serves as a coordination point for 4-amino-2-methyl-5-(diphosphooxymethyl)pyrimidine. Residue 157–159 (STT) participates in 2-[(2R,5Z)-2-carboxy-4-methylthiazol-5(2H)-ylidene]ethyl phosphate binding. Lys-160 contributes to the 4-amino-2-methyl-5-(diphosphooxymethyl)pyrimidine binding site. 2-[(2R,5Z)-2-carboxy-4-methylthiazol-5(2H)-ylidene]ethyl phosphate is bound by residues Gly-196 and 216–217 (VS). The disordered stretch occupies residues 256–311 (PATDTQAAQEGAAKPGSEATEKKFTNAKDAKDAQKLAKQQRVDIAARGSKQRDKAH). The phosphomethylpyrimidine synthase stretch occupies residues 271 to 917 (GSEATEKKFT…GGKLYSTAQE (647 aa)). A compositionally biased stretch (basic and acidic residues) spans 274-290 (ATEKKFTNAKDAKDAQK). 5-amino-1-(5-phospho-beta-D-ribosyl)imidazole is bound by residues Asn-487, Met-516, Tyr-545, His-581, 601-603 (SRG), 642-645 (DGLR), and Glu-681. His-685 contributes to the Zn(2+) binding site. Tyr-708 provides a ligand contact to 5-amino-1-(5-phospho-beta-D-ribosyl)imidazole. His-749 is a Zn(2+) binding site. Residues Cys-829, Cys-832, and Cys-837 each contribute to the [4Fe-4S] cluster site.

It in the N-terminal section; belongs to the thiamine-phosphate synthase family. In the C-terminal section; belongs to the ThiC family. [4Fe-4S] cluster serves as cofactor.

The catalysed reaction is 2-[(2R,5Z)-2-carboxy-4-methylthiazol-5(2H)-ylidene]ethyl phosphate + 4-amino-2-methyl-5-(diphosphooxymethyl)pyrimidine + 2 H(+) = thiamine phosphate + CO2 + diphosphate. The enzyme catalyses 2-(2-carboxy-4-methylthiazol-5-yl)ethyl phosphate + 4-amino-2-methyl-5-(diphosphooxymethyl)pyrimidine + 2 H(+) = thiamine phosphate + CO2 + diphosphate. It catalyses the reaction 4-methyl-5-(2-phosphooxyethyl)-thiazole + 4-amino-2-methyl-5-(diphosphooxymethyl)pyrimidine + H(+) = thiamine phosphate + diphosphate. It carries out the reaction 5-amino-1-(5-phospho-beta-D-ribosyl)imidazole + S-adenosyl-L-methionine = 4-amino-2-methyl-5-(phosphooxymethyl)pyrimidine + CO + 5'-deoxyadenosine + formate + L-methionine + 3 H(+). Its pathway is cofactor biosynthesis; thiamine diphosphate biosynthesis; thiamine phosphate from 4-amino-2-methyl-5-diphosphomethylpyrimidine and 4-methyl-5-(2-phosphoethyl)-thiazole: step 1/1. In terms of biological role, condenses 4-methyl-5-(beta-hydroxyethyl)thiazole monophosphate (THZ-P) and 2-methyl-4-amino-5-hydroxymethyl pyrimidine pyrophosphate (HMP-PP) to form thiamine monophosphate (TMP). Functionally, catalyzes the synthesis of the hydroxymethylpyrimidine phosphate (HMP-P) moiety of thiamine from aminoimidazole ribotide (AIR) in a radical S-adenosyl-L-methionine (SAM)-dependent reaction. This is Thiamine biosynthesis bifunctional protein ThiEC (thiE/thiC) from Bifidobacterium longum (strain NCC 2705).